We begin with the raw amino-acid sequence, 137 residues long: Large ribosomal subunit protein uL16 (137 aa).

This sequence belongs to the universal ribosomal protein uL16 family. In terms of assembly, part of the 50S ribosomal subunit.

Binds 23S rRNA and is also seen to make contacts with the A and possibly P site tRNAs. The chain is Large ribosomal subunit protein uL16 from Brucella abortus (strain S19).